The following is a 509-amino-acid chain: Maturase K (509 aa).

It belongs to the intron maturase 2 family. MatK subfamily.

It localises to the plastid. The protein localises to the chloroplast. Functionally, usually encoded in the trnK tRNA gene intron. Probably assists in splicing its own and other chloroplast group II introns. This Vachellia farnesiana (Sweet acacia) protein is Maturase K.